A 199-amino-acid chain; its full sequence is Hematopoietic prostaglandin D synthase (199 aa).

The GST N-terminal domain maps to 2–79 (PNYKLTYFNL…YLARESGLAG (78 aa)). Glutathione-binding positions include tyrosine 8, arginine 14, tryptophan 39, 49 to 51 (GKV), and 63 to 64 (QS). Residues 81–199 (TPVEQALADA…WIQKRPKTAI (119 aa)) form the GST C-terminal domain.

The protein belongs to the GST superfamily. Sigma family. Glutathione is required as a cofactor. In terms of tissue distribution, highly expressed in liver, kidney, small intestine and colon, moderately in pancreas, bone marrow, lung and ovary, and expressed at low levels in spleen, thymus, heart and brain. Not detected in oviduct or skin (at protein level). Expressed in liver.

The protein localises to the cytoplasm. The catalysed reaction is prostaglandin H2 = prostaglandin D2. It carries out the reaction RX + glutathione = an S-substituted glutathione + a halide anion + H(+). The enzyme catalyses 2-glyceryl-prostaglandin H2 = 2-glyceryl-prostaglandin D2. Functionally, bifunctional enzyme which catalyzes both the conversion of PGH2 to PGD2, a prostaglandin involved in smooth muscle contraction/relaxation and a potent inhibitor of platelet aggregation, and the conjugation of glutathione with a wide range of aryl halides, organic isothiocyanates and alpha,beta-unsaturated carbonyls. Also exhibits low glutathione-peroxidase activity towards cumene hydroperoxide and t-butyl hydroperoxide. The protein is Hematopoietic prostaglandin D synthase (HPGDS) of Gallus gallus (Chicken).